The chain runs to 237 residues: Lysophospholipase-like protein 1 (237 aa).

At Ala2 the chain carries N-acetylalanine. Residues Ser124, Asp179, and His211 each act as charge relay system in the active site.

It belongs to the AB hydrolase superfamily. AB hydrolase 2 family.

The protein resides in the cytoplasm. It localises to the cytosol. It catalyses the reaction S-hexadecanoyl-L-cysteinyl-[protein] + H2O = L-cysteinyl-[protein] + hexadecanoate + H(+). Palmitoyl thioesterase that catalyzes depalmitoylation of CGAS and KCNMA1. Acts as a regulator of innate immunity by mediating depalmitoylation of CGAS, thereby preventing CGAS homodimerization and cyclic GMP-AMP synthase activity. Does not exhibit phospholipase nor triacylglycerol lipase activity, able to hydrolyze only short chain substrates due to its shallow active site. This Pongo abelii (Sumatran orangutan) protein is Lysophospholipase-like protein 1.